Reading from the N-terminus, the 506-residue chain is Aminoaldehyde dehydrogenase 1b (506 aa).

Residue Asp-102 participates in Na(+) binding. NAD(+) contacts are provided by residues 162–164 (TPW) and 188–191 (KPSE). Leu-192 serves as a coordination point for Na(+). NAD(+) is bound by residues 242–245 (SFET) and Glu-263. The active-site Proton acceptor is the Glu-263. The Nucleophile role is filled by Cys-297. The NAD(+) site is built by Glu-396 and Trp-462.

Belongs to the aldehyde dehydrogenase family.

The enzyme catalyses 4-aminobutanal + NAD(+) + H2O = 4-aminobutanoate + NADH + 2 H(+). The catalysed reaction is 3-aminopropanal + NAD(+) + H2O = beta-alanine + NADH + 2 H(+). It catalyses the reaction 4-(trimethylamino)butanal + NAD(+) + H2O = 4-(trimethylamino)butanoate + NADH + 2 H(+). It carries out the reaction 4-guanidinobutanal + NAD(+) + H2O = 4-guanidinobutanoate + NADH + 2 H(+). The enzyme catalyses betaine aldehyde + NAD(+) + H2O = glycine betaine + NADH + 2 H(+). It participates in amine and polyamine biosynthesis; betaine biosynthesis via choline pathway; betaine from betaine aldehyde: step 1/1. Its function is as follows. Dehydrogenase that catalyzes the oxidation of several aminoaldehydes. Metabolizes and detoxifies aldehyde products of polyamine degradation to non-toxic amino acids. Catalyzes the oxidation of 4-aminobutanal and 3-aminopropanal to 4-aminobutanoate and beta-alanine, respectively. Catalyzes the oxidation of 4-(trimethylamino)butanal and 4-guanidinobutanal to 4-trimethylammoniobutanoate and 4-guanidinobutanoate, respectively. Catalyzes the oxidation of betaine aldehyde to glycine betaine. This Zea mays (Maize) protein is Aminoaldehyde dehydrogenase 1b.